An 832-amino-acid chain; its full sequence is DEAD-box ATP-dependent RNA helicase 13 (832 aa).

Residues M1–Q12 are compositionally biased toward pro residues. 2 disordered regions span residues M1–E59 and V91–V173. Over residues R29 to R42 the composition is skewed to basic residues. Residues A43–G55 are compositionally biased toward low complexity. Over residues Q105–K114 the composition is skewed to basic residues. Over residues L128 to E137 the composition is skewed to acidic residues. Positions K141–V155 are enriched in basic residues. Basic and acidic residues predominate over residues K156–D167. Residues Y198–K226 carry the Q motif motif. Residues P230–K447 enclose the Helicase ATP-binding domain. A243–T250 contacts ATP. A DEAD box motif is present at residues D371–D374. In terms of domain architecture, Helicase C-terminal spans K484 to P645. Residues R800–D832 are disordered. The span at K814–D832 shows a compositional bias: basic and acidic residues.

This sequence belongs to the DEAD box helicase family. DDX24/MAK5 subfamily.

The catalysed reaction is ATP + H2O = ADP + phosphate + H(+). The protein is DEAD-box ATP-dependent RNA helicase 13 of Oryza sativa subsp. japonica (Rice).